The primary structure comprises 685 residues: Allergen Cr-PI (685 aa).

The first 16 residues, 1 to 16 (MKTALVFAAVVAFVAA), serve as a signal peptide directing secretion. Asn-233 is a glycosylation site (N-linked (GlcNAc...) asparagine).

Belongs to the hemocyanin family.

It localises to the secreted. The protein localises to the extracellular space. Larval storage protein (LSP) which may serve as a store of amino acids for synthesis of adult proteins. This chain is Allergen Cr-PI, found in Periplaneta americana (American cockroach).